We begin with the raw amino-acid sequence, 604 residues long: Elongation factor 4 (604 aa).

A tr-type G domain is found at 7 to 189 (KRIRNFCIIA…SVVDRVPPPA (183 aa)). Residues 19–24 (DHGKST) and 136–139 (NKID) each bind GTP.

Belongs to the TRAFAC class translation factor GTPase superfamily. Classic translation factor GTPase family. LepA subfamily.

The protein resides in the cell inner membrane. The catalysed reaction is GTP + H2O = GDP + phosphate + H(+). In terms of biological role, required for accurate and efficient protein synthesis under certain stress conditions. May act as a fidelity factor of the translation reaction, by catalyzing a one-codon backward translocation of tRNAs on improperly translocated ribosomes. Back-translocation proceeds from a post-translocation (POST) complex to a pre-translocation (PRE) complex, thus giving elongation factor G a second chance to translocate the tRNAs correctly. Binds to ribosomes in a GTP-dependent manner. The protein is Elongation factor 4 of Synechococcus sp. (strain CC9311).